The primary structure comprises 360 residues: Peptide chain release factor 1 (360 aa).

Gln-233 is subject to N5-methylglutamine. The segment at 286-305 (NEIAQERKSQVGTGDRSERI) is disordered.

This sequence belongs to the prokaryotic/mitochondrial release factor family. Post-translationally, methylated by PrmC. Methylation increases the termination efficiency of RF1.

The protein resides in the cytoplasm. Functionally, peptide chain release factor 1 directs the termination of translation in response to the peptide chain termination codons UAG and UAA. The polypeptide is Peptide chain release factor 1 (Acetivibrio thermocellus (strain ATCC 27405 / DSM 1237 / JCM 9322 / NBRC 103400 / NCIMB 10682 / NRRL B-4536 / VPI 7372) (Clostridium thermocellum)).